A 61-amino-acid chain; its full sequence is Metallothionein-1C (61 aa).

The segment at 1–29 (MDPNCSCSTGSSCSCAGSCTCKACRCPSC) is beta. Residues cysteine 5, cysteine 7, cysteine 13, cysteine 15, cysteine 19, cysteine 21, cysteine 24, cysteine 26, cysteine 29, cysteine 33, cysteine 34, cysteine 36, cysteine 37, cysteine 41, cysteine 44, cysteine 48, cysteine 50, cysteine 57, cysteine 59, and cysteine 60 each coordinate a divalent metal cation. Positions 30-61 (KKSCCSCCPVGCAKCAQGCICKGASDKCSCCA) are alpha.

This sequence belongs to the metallothionein superfamily. Type 1 family.

Functionally, metallothioneins have a high content of cysteine residues that bind various heavy metals; these proteins are transcriptionally regulated by both heavy metals and glucocorticoids. This Ovis aries (Sheep) protein is Metallothionein-1C (MT1C).